The sequence spans 259 residues: Acyl-[acyl-carrier-protein]--UDP-N-acetylglucosamine O-acyltransferase (259 aa).

Belongs to the transferase hexapeptide repeat family. LpxA subfamily. In terms of assembly, homotrimer.

The protein localises to the cytoplasm. The catalysed reaction is a (3R)-hydroxyacyl-[ACP] + UDP-N-acetyl-alpha-D-glucosamine = a UDP-3-O-[(3R)-3-hydroxyacyl]-N-acetyl-alpha-D-glucosamine + holo-[ACP]. Its pathway is glycolipid biosynthesis; lipid IV(A) biosynthesis; lipid IV(A) from (3R)-3-hydroxytetradecanoyl-[acyl-carrier-protein] and UDP-N-acetyl-alpha-D-glucosamine: step 1/6. Its function is as follows. Involved in the biosynthesis of lipid A, a phosphorylated glycolipid that anchors the lipopolysaccharide to the outer membrane of the cell. This chain is Acyl-[acyl-carrier-protein]--UDP-N-acetylglucosamine O-acyltransferase, found in Akkermansia muciniphila (strain ATCC BAA-835 / DSM 22959 / JCM 33894 / BCRC 81048 / CCUG 64013 / CIP 107961 / Muc).